The primary structure comprises 497 residues: Nucleoside transporter 1 (497 aa).

Residues 1–26 are Cytoplasmic-facing; it reads MSLKGGTAAPAPMAPPRKWYDMTSAE. The chain crosses the membrane as a helical span at residues 27–47; it reads FYVYVVAFMCGISIMMPINAV. Over 48–77 the chain is Extracellular; it reads FSAPSYMLEYYLYATKDPFLVPKMTNFWTN. Residues 78–98 form a helical membrane-spanning segment; it reads VMTYYNLISMVTSLVVEPLTL. Topologically, residues 99-107 are cytoplasmic; the sequence is LKSFRKIPM. A helical transmembrane segment spans residues 108–128; the sequence is LVRLLGGLSVLIIEIIVLMVV. The Extracellular portion of the chain corresponds to 129–135; sequence PARGTTE. Residues 136-156 form a helical membrane-spanning segment; that stretch reads AGAVATMCIAGFIGGLGTSIF. Over 157–172 the chain is Cytoplasmic; it reads ESTVYGMFGAFPPSFT. A helical membrane pass occupies residues 173–193; that stretch reads SIMMGGVGISGVLTSLIQIIV. Topologically, residues 194–208 are extracellular; the sequence is KAALPDTYEGVKKQS. The helical transmembrane segment at 209–229 threads the bilayer; that stretch reads YIYYSLDVGIQAATFIALIMM. Over 230-337 the chain is Cytoplasmic; the sequence is RFNSFAQLHF…SVFSVLRSVK (108 aa). A compositionally biased stretch (basic and acidic residues) spans 286–299; that stretch reads NAEAHKDDPLAERE. The segment at 286–316 is disordered; it reads NAEAHKDDPLAERELSEEESGDSRAVEAAGE. Residues 338–358 traverse the membrane as a helical segment; the sequence is WMFVACGFNFLITLFLFPGIA. Topologically, residues 359–361 are extracellular; sequence TGM. A helical membrane pass occupies residues 362-382; it reads FPESKWFATVAVFIFNCCDVL. Topologically, residues 383-400 are cytoplasmic; that stretch reads GRFSSAFRITWPRRYNQR. A helical transmembrane segment spans residues 401–421; sequence WIIVAASFARVIFVPLLLLHS. The Extracellular portion of the chain corresponds to 422–432; that stretch reads YHYIPSEAYGY. A helical membrane pass occupies residues 433-453; the sequence is VMQVVFGLSSGYIASMALVLG. The Cytoplasmic portion of the chain corresponds to 454 to 465; sequence PQSKGIDNDGKR. The chain crosses the membrane as a helical span at residues 466 to 486; sequence FVAGTLMGISILVGGTIGTVL. The Extracellular portion of the chain corresponds to 487–497; sequence SIMTQTIRETY.

It belongs to the SLC29A/ENT transporter (TC 2.A.57) family.

It localises to the cell membrane. It catalyses the reaction adenosine(in) = adenosine(out). The enzyme catalyses hypoxanthine(out) = hypoxanthine(in). The catalysed reaction is inosine(in) = inosine(out). It carries out the reaction uridine(out) = uridine(in). It catalyses the reaction cytidine(in) = cytidine(out). Nucleoside transporter with broad substrate specificity. Transports adenosine with high affinity. Can also transport hypoxanthine, inosine, uridine and cytidine. This is Nucleoside transporter 1 from Crithidia fasciculata.